The chain runs to 229 residues: Endonuclease V (229 aa).

Residues aspartate 43 and aspartate 111 each coordinate Mg(2+).

It belongs to the endonuclease V family. Requires Mg(2+) as cofactor.

It is found in the cytoplasm. It carries out the reaction Endonucleolytic cleavage at apurinic or apyrimidinic sites to products with a 5'-phosphate.. In terms of biological role, DNA repair enzyme involved in the repair of deaminated bases. Selectively cleaves double-stranded DNA at the second phosphodiester bond 3' to a deoxyinosine leaving behind the intact lesion on the nicked DNA. The chain is Endonuclease V from Rippkaea orientalis (strain PCC 8801 / RF-1) (Cyanothece sp. (strain PCC 8801)).